The sequence spans 171 residues: UPF0312 protein SAOUHSC_03022 (171 aa).

The protein belongs to the UPF0312 family.

This is UPF0312 protein SAOUHSC_03022 from Staphylococcus aureus (strain NCTC 8325 / PS 47).